The chain runs to 378 residues: UPF0754 membrane protein BT9727_0767 (378 aa).

The next 2 helical transmembrane spans lie at 1 to 21 and 357 to 377; these read MNIW…GGFT and YLGA…LLFL.

The protein belongs to the UPF0754 family.

It is found in the cell membrane. The chain is UPF0754 membrane protein BT9727_0767 from Bacillus thuringiensis subsp. konkukian (strain 97-27).